The sequence spans 61 residues: Small ribosomal subunit protein uS14 (61 aa).

Zn(2+) is bound by residues Cys-24, Cys-27, Cys-40, and Cys-43.

The protein belongs to the universal ribosomal protein uS14 family. Zinc-binding uS14 subfamily. As to quaternary structure, part of the 30S ribosomal subunit. Contacts proteins S3 and S10. The cofactor is Zn(2+).

Its function is as follows. Binds 16S rRNA, required for the assembly of 30S particles and may also be responsible for determining the conformation of the 16S rRNA at the A site. This is Small ribosomal subunit protein uS14 from Pseudothermotoga lettingae (strain ATCC BAA-301 / DSM 14385 / NBRC 107922 / TMO) (Thermotoga lettingae).